The chain runs to 636 residues: Translation factor GUF1 homolog, chloroplastic (636 aa).

The tr-type G domain occupies Asn31–Gln212. GTP contacts are provided by residues Ala40–Ser47, Asp105–His109, and Asn159–Asp162.

This sequence belongs to the TRAFAC class translation factor GTPase superfamily. Classic translation factor GTPase family. LepA subfamily.

It localises to the plastid. It is found in the chloroplast. The enzyme catalyses GTP + H2O = GDP + phosphate + H(+). Functionally, promotes chloroplast protein synthesis. May act as a fidelity factor of the translation reaction, by catalyzing a one-codon backward translocation of tRNAs on improperly translocated ribosomes. This chain is Translation factor GUF1 homolog, chloroplastic, found in Oryza sativa subsp. indica (Rice).